Consider the following 705-residue polypeptide: Polyribonucleotide nucleotidyltransferase (705 aa).

The Mg(2+) site is built by Asp-486 and Asp-492. Residues 553–612 (PRIYKIKINPEKIKDVIGKGGSVIRMLTEKTKSSIEIEDDGTVKVISTDIKNAQCALKKI) form the KH domain. Residues 622–690 (NKIYVAKITR…RYGRIRLSFT (69 aa)) enclose the S1 motif domain.

This sequence belongs to the polyribonucleotide nucleotidyltransferase family. As to quaternary structure, component of the RNA degradosome, which is a multiprotein complex involved in RNA processing and mRNA degradation. Requires Mg(2+) as cofactor.

Its subcellular location is the cytoplasm. The catalysed reaction is RNA(n+1) + phosphate = RNA(n) + a ribonucleoside 5'-diphosphate. Functionally, involved in mRNA degradation. Catalyzes the phosphorolysis of single-stranded polyribonucleotides processively in the 3'- to 5'-direction. The sequence is that of Polyribonucleotide nucleotidyltransferase from Wigglesworthia glossinidia brevipalpis.